A 320-amino-acid polypeptide reads, in one-letter code: Dermonecrotic toxin LarSicTox-alphaIB2a (320 aa).

The first 15 residues, 1–15 (MSHSSTALLHPYVAA), serve as a signal peptide directing secretion. Residues 16-41 (RATEKFAPIYFFCHPLQSAETDVAER) constitute a propeptide that is removed on maturation. Residue histidine 52 is part of the active site. Mg(2+)-binding residues include glutamate 72 and aspartate 74. Histidine 88 acts as the Nucleophile in catalysis. Disulfide bonds link cysteine 92-cysteine 98 and cysteine 94-cysteine 237. Aspartate 132 lines the Mg(2+) pocket. A glycan (N-linked (GlcNAc...) asparagine) is linked at asparagine 297.

Belongs to the arthropod phospholipase D family. Class II subfamily. The cofactor is Mg(2+). Expressed by the venom gland.

It is found in the secreted. It carries out the reaction an N-(acyl)-sphingosylphosphocholine = an N-(acyl)-sphingosyl-1,3-cyclic phosphate + choline. The catalysed reaction is an N-(acyl)-sphingosylphosphoethanolamine = an N-(acyl)-sphingosyl-1,3-cyclic phosphate + ethanolamine. The enzyme catalyses a 1-acyl-sn-glycero-3-phosphocholine = a 1-acyl-sn-glycero-2,3-cyclic phosphate + choline. It catalyses the reaction a 1-acyl-sn-glycero-3-phosphoethanolamine = a 1-acyl-sn-glycero-2,3-cyclic phosphate + ethanolamine. Its function is as follows. Dermonecrotic toxins cleave the phosphodiester linkage between the phosphate and headgroup of certain phospholipids (sphingolipid and lysolipid substrates), forming an alcohol (often choline) and a cyclic phosphate. This toxin acts on sphingomyelin (SM). It may also act on ceramide phosphoethanolamine (CPE), lysophosphatidylcholine (LPC) and lysophosphatidylethanolamine (LPE), but not on lysophosphatidylserine (LPS), and lysophosphatidylglycerol (LPG). It acts by transphosphatidylation, releasing exclusively cyclic phosphate products as second products. Induces dermonecrosis, hemolysis, increased vascular permeability, edema, inflammatory response, and platelet aggregation. The chain is Dermonecrotic toxin LarSicTox-alphaIB2a from Loxosceles arizonica (Arizona brown spider).